Consider the following 311-residue polypeptide: DNA replication terminus site-binding protein (311 aa).

Belongs to the Tus family.

The protein resides in the cytoplasm. Functionally, trans-acting protein required for termination of DNA replication. Binds to DNA replication terminator sequences (terA to terF) to prevent the passage of replication forks. The termination efficiency will be affected by the affinity of this protein for the terminator sequence. This Yersinia pseudotuberculosis serotype I (strain IP32953) protein is DNA replication terminus site-binding protein.